The following is a 150-amino-acid chain: uncharacterized protein (150 aa).

The N-terminal stretch at 1–39 (MKQRFSQVATVIFFVMSIRSPRNLGFFFTLALFVVLVCS) is a signal peptide.

This is an uncharacterized protein from Saccharomyces cerevisiae (strain ATCC 204508 / S288c) (Baker's yeast).